A 352-amino-acid chain; its full sequence is Holliday junction branch migration complex subunit RuvB (352 aa).

The tract at residues 4–185 is large ATPase domain (RuvB-L); sequence PDRLISAVSG…FGIVQRLEFY (182 aa). Residues isoleucine 24, arginine 25, glycine 66, lysine 69, threonine 70, threonine 71, 132–134, arginine 175, tyrosine 185, and arginine 222 contribute to the ATP site; that span reads EDF. Residue threonine 70 participates in Mg(2+) binding. Positions 186–256 are small ATPAse domain (RuvB-S); that stretch reads NVEDLATIVS…IADKALNLLD (71 aa). The head domain (RuvB-H) stretch occupies residues 259–352; that stretch reads ERGFDHLDRR…SDLFTSEDGN (94 aa). Arginine 295, arginine 314, and arginine 319 together coordinate DNA.

Belongs to the RuvB family. In terms of assembly, homohexamer. Forms an RuvA(8)-RuvB(12)-Holliday junction (HJ) complex. HJ DNA is sandwiched between 2 RuvA tetramers; dsDNA enters through RuvA and exits via RuvB. An RuvB hexamer assembles on each DNA strand where it exits the tetramer. Each RuvB hexamer is contacted by two RuvA subunits (via domain III) on 2 adjacent RuvB subunits; this complex drives branch migration. In the full resolvosome a probable DNA-RuvA(4)-RuvB(12)-RuvC(2) complex forms which resolves the HJ.

Its subcellular location is the cytoplasm. The catalysed reaction is ATP + H2O = ADP + phosphate + H(+). In terms of biological role, the RuvA-RuvB-RuvC complex processes Holliday junction (HJ) DNA during genetic recombination and DNA repair, while the RuvA-RuvB complex plays an important role in the rescue of blocked DNA replication forks via replication fork reversal (RFR). RuvA specifically binds to HJ cruciform DNA, conferring on it an open structure. The RuvB hexamer acts as an ATP-dependent pump, pulling dsDNA into and through the RuvAB complex. RuvB forms 2 homohexamers on either side of HJ DNA bound by 1 or 2 RuvA tetramers; 4 subunits per hexamer contact DNA at a time. Coordinated motions by a converter formed by DNA-disengaged RuvB subunits stimulates ATP hydrolysis and nucleotide exchange. Immobilization of the converter enables RuvB to convert the ATP-contained energy into a lever motion, pulling 2 nucleotides of DNA out of the RuvA tetramer per ATP hydrolyzed, thus driving DNA branch migration. The RuvB motors rotate together with the DNA substrate, which together with the progressing nucleotide cycle form the mechanistic basis for DNA recombination by continuous HJ branch migration. Branch migration allows RuvC to scan DNA until it finds its consensus sequence, where it cleaves and resolves cruciform DNA. The sequence is that of Holliday junction branch migration complex subunit RuvB from Pseudomonas paraeruginosa (strain DSM 24068 / PA7) (Pseudomonas aeruginosa (strain PA7)).